A 440-amino-acid chain; its full sequence is Chromosome partition protein MukF (440 aa).

A leucine-zipper region spans residues 208–236; that stretch reads LSETSGTLRELQDTLEAAGDKLQANLLRI.

Belongs to the MukF family. In terms of assembly, interacts, and probably forms a ternary complex, with MukE and MukB via its C-terminal region. The complex formation is stimulated by calcium or magnesium. It is required for an interaction between MukE and MukB.

The protein resides in the cytoplasm. It localises to the nucleoid. Its function is as follows. Involved in chromosome condensation, segregation and cell cycle progression. May participate in facilitating chromosome segregation by condensation DNA from both sides of a centrally located replisome during cell division. Not required for mini-F plasmid partitioning. Probably acts via its interaction with MukB and MukE. Overexpression results in anucleate cells. It has a calcium binding activity. The polypeptide is Chromosome partition protein MukF (Shigella boydii serotype 18 (strain CDC 3083-94 / BS512)).